Reading from the N-terminus, the 198-residue chain is dCTP deaminase (198 aa).

DCTP-binding positions include 110-115 (RSSLAR), Asp128, 136-138 (VLE), Tyr171, Lys178, and Gln182. Glu138 (proton donor/acceptor) is an active-site residue. Residues 168-198 (ARPYNKREDAKYRDQKGAVASRISQDEKVNK) form a disordered region. Residues 172–183 (NKREDAKYRDQK) show a composition bias toward basic and acidic residues.

The protein belongs to the dCTP deaminase family. In terms of assembly, homotrimer.

It carries out the reaction dCTP + H2O + H(+) = dUTP + NH4(+). Its pathway is pyrimidine metabolism; dUMP biosynthesis; dUMP from dCTP (dUTP route): step 1/2. Its function is as follows. Catalyzes the deamination of dCTP to dUTP. The protein is dCTP deaminase of Colwellia psychrerythraea (strain 34H / ATCC BAA-681) (Vibrio psychroerythus).